A 593-amino-acid chain; its full sequence is Aspartate--tRNA(Asp/Asn) ligase (593 aa).

Glutamate 173 is an L-aspartate binding site. An aspartate region spans residues 197-200 (QLFK). An L-aspartate-binding site is contributed by arginine 219. ATP is bound by residues 219 to 221 (RDE) and glutamine 228. Histidine 451 lines the L-aspartate pocket. Glutamate 485 is an ATP binding site. Arginine 492 lines the L-aspartate pocket. An ATP-binding site is contributed by 537–540 (GIDR).

This sequence belongs to the class-II aminoacyl-tRNA synthetase family. Type 1 subfamily. In terms of assembly, homodimer.

It localises to the cytoplasm. The catalysed reaction is tRNA(Asx) + L-aspartate + ATP = L-aspartyl-tRNA(Asx) + AMP + diphosphate. Its function is as follows. Aspartyl-tRNA synthetase with relaxed tRNA specificity since it is able to aspartylate not only its cognate tRNA(Asp) but also tRNA(Asn). Reaction proceeds in two steps: L-aspartate is first activated by ATP to form Asp-AMP and then transferred to the acceptor end of tRNA(Asp/Asn). The polypeptide is Aspartate--tRNA(Asp/Asn) ligase (Legionella pneumophila subsp. pneumophila (strain Philadelphia 1 / ATCC 33152 / DSM 7513)).